Reading from the N-terminus, the 243-residue chain is Ubiquinone/menaquinone biosynthesis C-methyltransferase UbiE (243 aa).

S-adenosyl-L-methionine is bound by residues threonine 69, aspartate 90, and 116 to 117 (DA).

This sequence belongs to the class I-like SAM-binding methyltransferase superfamily. MenG/UbiE family.

It catalyses the reaction a 2-demethylmenaquinol + S-adenosyl-L-methionine = a menaquinol + S-adenosyl-L-homocysteine + H(+). The catalysed reaction is a 2-methoxy-6-(all-trans-polyprenyl)benzene-1,4-diol + S-adenosyl-L-methionine = a 5-methoxy-2-methyl-3-(all-trans-polyprenyl)benzene-1,4-diol + S-adenosyl-L-homocysteine + H(+). Its pathway is quinol/quinone metabolism; menaquinone biosynthesis; menaquinol from 1,4-dihydroxy-2-naphthoate: step 2/2. It participates in cofactor biosynthesis; ubiquinone biosynthesis. Methyltransferase required for the conversion of demethylmenaquinol (DMKH2) to menaquinol (MKH2) and the conversion of 2-polyprenyl-6-methoxy-1,4-benzoquinol (DDMQH2) to 2-polyprenyl-3-methyl-6-methoxy-1,4-benzoquinol (DMQH2). The polypeptide is Ubiquinone/menaquinone biosynthesis C-methyltransferase UbiE (Paraburkholderia phymatum (strain DSM 17167 / CIP 108236 / LMG 21445 / STM815) (Burkholderia phymatum)).